Here is a 302-residue protein sequence, read N- to C-terminus: 4-hydroxy-tetrahydrodipicolinate synthase (302 aa).

Thr-55 contacts pyruvate. Tyr-144 functions as the Proton donor/acceptor in the catalytic mechanism. Lys-172 functions as the Schiff-base intermediate with substrate in the catalytic mechanism. Residue Val-214 coordinates pyruvate.

It belongs to the DapA family. As to quaternary structure, homotetramer; dimer of dimers.

It localises to the cytoplasm. It catalyses the reaction L-aspartate 4-semialdehyde + pyruvate = (2S,4S)-4-hydroxy-2,3,4,5-tetrahydrodipicolinate + H2O + H(+). It participates in amino-acid biosynthesis; L-lysine biosynthesis via DAP pathway; (S)-tetrahydrodipicolinate from L-aspartate: step 3/4. Its function is as follows. Catalyzes the condensation of (S)-aspartate-beta-semialdehyde [(S)-ASA] and pyruvate to 4-hydroxy-tetrahydrodipicolinate (HTPA). This chain is 4-hydroxy-tetrahydrodipicolinate synthase, found in Prochlorococcus marinus (strain MIT 9211).